The sequence spans 200 residues: Large ribosomal subunit protein bL25 (200 aa).

This sequence belongs to the bacterial ribosomal protein bL25 family. CTC subfamily. As to quaternary structure, part of the 50S ribosomal subunit; part of the 5S rRNA/L5/L18/L25 subcomplex. Contacts the 5S rRNA. Binds to the 5S rRNA independently of L5 and L18.

Its function is as follows. This is one of the proteins that binds to the 5S RNA in the ribosome where it forms part of the central protuberance. This chain is Large ribosomal subunit protein bL25, found in Pseudomonas fluorescens (strain Pf0-1).